The chain runs to 181 residues: ATP synthase subunit b, chloroplastic (181 aa).

A helical membrane pass occupies residues 31-50 (NVLNIAILLSGVVYLGRNFL).

Belongs to the ATPase B chain family. In terms of assembly, F-type ATPases have 2 components, F(1) - the catalytic core - and F(0) - the membrane proton channel. F(1) has five subunits: alpha(3), beta(3), gamma(1), delta(1), epsilon(1). F(0) has four main subunits: a(1), b(1), b'(1) and c(10-14). The alpha and beta chains form an alternating ring which encloses part of the gamma chain. F(1) is attached to F(0) by a central stalk formed by the gamma and epsilon chains, while a peripheral stalk is formed by the delta, b and b' chains.

It localises to the plastid. The protein localises to the chloroplast thylakoid membrane. Functionally, f(1)F(0) ATP synthase produces ATP from ADP in the presence of a proton or sodium gradient. F-type ATPases consist of two structural domains, F(1) containing the extramembraneous catalytic core and F(0) containing the membrane proton channel, linked together by a central stalk and a peripheral stalk. During catalysis, ATP synthesis in the catalytic domain of F(1) is coupled via a rotary mechanism of the central stalk subunits to proton translocation. Component of the F(0) channel, it forms part of the peripheral stalk, linking F(1) to F(0). The sequence is that of ATP synthase subunit b, chloroplastic from Rhodomonas salina (Cryptomonas salina).